The chain runs to 351 residues: tRNA-specific 2-thiouridylase MnmA (351 aa).

6-13 serves as a coordination point for ATP; the sequence is ALSGGTDS. Residue Cys96 is the Nucleophile of the active site. Cys96 and Cys193 are oxidised to a cystine. Residue Gly120 participates in ATP binding. An interaction with tRNA region spans residues 143–145; it reads KDQ. The Cysteine persulfide intermediate role is filled by Cys193. Residues 298–299 are interaction with tRNA; the sequence is RY.

It belongs to the MnmA/TRMU family.

The protein resides in the cytoplasm. It carries out the reaction S-sulfanyl-L-cysteinyl-[protein] + uridine(34) in tRNA + AH2 + ATP = 2-thiouridine(34) in tRNA + L-cysteinyl-[protein] + A + AMP + diphosphate + H(+). Functionally, catalyzes the 2-thiolation of uridine at the wobble position (U34) of tRNA, leading to the formation of s(2)U34. The protein is tRNA-specific 2-thiouridylase MnmA of Nitratidesulfovibrio vulgaris (strain DSM 19637 / Miyazaki F) (Desulfovibrio vulgaris).